We begin with the raw amino-acid sequence, 466 residues long: Uronate isomerase (466 aa).

Belongs to the metallo-dependent hydrolases superfamily. Uronate isomerase family.

The catalysed reaction is D-glucuronate = D-fructuronate. It carries out the reaction aldehydo-D-galacturonate = keto-D-tagaturonate. The protein operates within carbohydrate metabolism; pentose and glucuronate interconversion. The protein is Uronate isomerase of Streptococcus agalactiae serotype V (strain ATCC BAA-611 / 2603 V/R).